The sequence spans 395 residues: Glutamate N-acetyltransferase (395 aa).

Residues Thr146, Lys169, Thr180, Glu263, Asn390, and Thr395 each coordinate substrate. Thr180 acts as the Nucleophile in catalysis.

Belongs to the ArgJ family. Heterotetramer of two alpha and two beta chains.

It localises to the cytoplasm. The enzyme catalyses N(2)-acetyl-L-ornithine + L-glutamate = N-acetyl-L-glutamate + L-ornithine. It participates in amino-acid biosynthesis; L-arginine biosynthesis; L-ornithine and N-acetyl-L-glutamate from L-glutamate and N(2)-acetyl-L-ornithine (cyclic): step 1/1. Its function is as follows. Catalyzes the transfer of the acetyl group from N(2)-acetylornithine to glutamate, forming N-acetylglutamate and L-ornithine. In Methanosarcina acetivorans (strain ATCC 35395 / DSM 2834 / JCM 12185 / C2A), this protein is Glutamate N-acetyltransferase.